The chain runs to 142 residues: Small ribosomal subunit protein uS12 (142 aa).

Positions 1–43 (MPTFNQLVRKGRKVIEKKSNSPALQKGFNSKKKKPTDVNSPQK) are disordered. D102 carries the post-translational modification 3-methylthioaspartic acid.

Belongs to the universal ribosomal protein uS12 family. In terms of assembly, part of the 30S ribosomal subunit. Contacts proteins S8 and S17. May interact with IF1 in the 30S initiation complex.

Functionally, with S4 and S5 plays an important role in translational accuracy. Interacts with and stabilizes bases of the 16S rRNA that are involved in tRNA selection in the A site and with the mRNA backbone. Located at the interface of the 30S and 50S subunits, it traverses the body of the 30S subunit contacting proteins on the other side and probably holding the rRNA structure together. The combined cluster of proteins S8, S12 and S17 appears to hold together the shoulder and platform of the 30S subunit. The chain is Small ribosomal subunit protein uS12 from Ruminiclostridium cellulolyticum (strain ATCC 35319 / DSM 5812 / JCM 6584 / H10) (Clostridium cellulolyticum).